A 276-amino-acid polypeptide reads, in one-letter code: NADPH-dependent 7-cyano-7-deazaguanine reductase (276 aa).

83–85 lines the substrate pocket; the sequence is IES. 85–86 is an NADPH binding site; it reads SK. Residue C184 is the Thioimide intermediate of the active site. D191 (proton donor) is an active-site residue. 223–224 contributes to the substrate binding site; that stretch reads HE. Residue 252–253 participates in NADPH binding; it reads RG.

The protein belongs to the GTP cyclohydrolase I family. QueF type 2 subfamily. As to quaternary structure, homodimer.

It is found in the cytoplasm. It catalyses the reaction 7-aminomethyl-7-carbaguanine + 2 NADP(+) = 7-cyano-7-deazaguanine + 2 NADPH + 3 H(+). It functions in the pathway tRNA modification; tRNA-queuosine biosynthesis. In terms of biological role, catalyzes the NADPH-dependent reduction of 7-cyano-7-deazaguanine (preQ0) to 7-aminomethyl-7-deazaguanine (preQ1). The protein is NADPH-dependent 7-cyano-7-deazaguanine reductase of Pseudomonas putida (strain W619).